Here is a 264-residue protein sequence, read N- to C-terminus: Nuclear egress protein 1 (264 aa).

A compositionally biased stretch (basic residues) spans 1 to 12 (MTVHKNRFRRSR). Positions 1-22 (MTVHKNRFRRSRSLSVTHRIQK) are disordered. The CCCH-type zinc-finger motif lies at 83–187 (CLEFSPYANE…HIVFQSRTLH (105 aa)).

The protein belongs to the herpesviridae NEC1 protein family. As to quaternary structure, forms a heterohexameric complex with NEC2. Interacts with capsid vertex specific component 2/CVC2; this interaction directs the capsid to the host inner nuclear membrane to initiate budding. Post-translationally, phosphorylated at serine residues in the N-terminus. This phosphorylation regulates the localization within the inner nuclear membrane.

The protein resides in the host nucleus inner membrane. Its function is as follows. Plays an essential role in virion nuclear egress, the first step of virion release from infected cell. Within the host nucleus, NEC1 interacts with the newly formed capsid through the vertexes and directs it to the inner nuclear membrane by associating with NEC2. Induces the budding of the capsid at the inner nuclear membrane as well as its envelopment into the perinuclear space. There, the NEC1/NEC2 complex promotes the fusion of the enveloped capsid with the outer nuclear membrane and the subsequent release of the viral capsid into the cytoplasm where it will reach the secondary budding sites in the host Golgi or trans-Golgi network. The chain is Nuclear egress protein 1 from Human herpesvirus 6B (HHV-6 variant B).